Reading from the N-terminus, the 147-residue chain is Ubiquitin-conjugating enzyme E2-16 kDa (147 aa).

The 147-residue stretch at Met1–Ile147 folds into the UBC core domain. The active-site Glycyl thioester intermediate is Cys107.

The protein belongs to the ubiquitin-conjugating enzyme family.

The catalysed reaction is S-ubiquitinyl-[E1 ubiquitin-activating enzyme]-L-cysteine + [E2 ubiquitin-conjugating enzyme]-L-cysteine = [E1 ubiquitin-activating enzyme]-L-cysteine + S-ubiquitinyl-[E2 ubiquitin-conjugating enzyme]-L-cysteine.. Its pathway is protein modification; protein ubiquitination. Its function is as follows. Catalyzes the covalent attachment of ubiquitin to other proteins. This chain is Ubiquitin-conjugating enzyme E2-16 kDa (UBC1), found in Pyricularia oryzae (strain 70-15 / ATCC MYA-4617 / FGSC 8958) (Rice blast fungus).